Consider the following 213-residue polypeptide: MDTIWDISPPIAPATPVWPGDTPVGIERVWRIEAGSPVNVARVTLSPHTGAHADAPLHYDADGTPIGAVPLDAYLGRCRVIHCIGARSAVTPEHVRAALAGAPPRVLLRTYGQAPQHAWNSAFCAVAPETIDLLAAHGVRLVGIDTPSLDPQESKTMDAHRRIRAHRMAILEGLVLDEIAAGDYELIALPLKFTTLDASPVRAVLRALPDAPR.

W18 lines the substrate pocket. 3 residues coordinate Zn(2+): H48, H52, and D54. H58 serves as the catalytic Proton donor/acceptor. The Zn(2+) site is built by H160 and E172.

The protein belongs to the Cyclase 1 superfamily. KynB family. In terms of assembly, homodimer. The cofactor is Zn(2+).

It carries out the reaction N-formyl-L-kynurenine + H2O = L-kynurenine + formate + H(+). The protein operates within amino-acid degradation; L-tryptophan degradation via kynurenine pathway; L-kynurenine from L-tryptophan: step 2/2. Catalyzes the hydrolysis of N-formyl-L-kynurenine to L-kynurenine, the second step in the kynurenine pathway of tryptophan degradation. The chain is Kynurenine formamidase from Burkholderia pseudomallei (strain 1710b).